The following is a 504-amino-acid chain: MSSLTGKVKGRARKIKGDADIRVNESTENVGLVIRVMTAVVDIKFPSGKVPKILNALESKEIYNGKKLVLEVSQHISDSIVRCIALDSTDGLSRNDEFIDTGAPISVPVGRATLGRVFDVLGNPIDNCGPLTKSDYSIKPIYSEVPKLTDQKVTTEILVTGIKVIDLLAPYLKGGKVGLFGGAGVGKTVLIMELIHNIAKAHKGVSVFAGVGERTREGNDLYHEMIESGVINLEEKDKSQAVLVYGQMNEPPGARLRVALSALTMAEYFRDVENQDVLFFVDNIFRFTQSGSEISALLGRIPSAVGYQPTLAAEMGAMQERITSTNRGSITSVQAIYVPADDLTDPAPATSFAHLDSTTVLSRQIAELGIYPAVDPLDSASQALSIDIVGEKHYEVSKEVQRILQTYKSLQDIIAILGMEELSEEDKLIVARARKIQRFLSQPFHVAEVFTGTPGVFVSLEDTVSSFKDIVEGKYDHLPEAAFYMVSNINEAVKKAELLQKEGK.

An ATP-binding site is contributed by G181–T188.

The protein belongs to the ATPase alpha/beta chains family. As to quaternary structure, F-type ATPases have 2 components, CF(1) - the catalytic core - and CF(0) - the membrane proton channel. CF(1) has five subunits: alpha(3), beta(3), gamma(1), delta(1), epsilon(1). CF(0) has three main subunits: a(1), b(2) and c(9-12). The alpha and beta chains form an alternating ring which encloses part of the gamma chain. CF(1) is attached to CF(0) by a central stalk formed by the gamma and epsilon chains, while a peripheral stalk is formed by the delta and b chains.

The protein resides in the cell inner membrane. The catalysed reaction is ATP + H2O + 4 H(+)(in) = ADP + phosphate + 5 H(+)(out). Functionally, produces ATP from ADP in the presence of a proton gradient across the membrane. The catalytic sites are hosted primarily by the beta subunits. The chain is ATP synthase subunit beta from Ehrlichia ruminantium (strain Gardel).